A 209-amino-acid chain; its full sequence is Glutathione S-transferase 1, isoform C (209 aa).

Positions 1 to 80 (MDFYYLPGSA…YLAEKYGKDD (80 aa)) constitute a GST N-terminal domain. Glutathione-binding positions include Ser-9, 50 to 52 (HCI), and 64 to 66 (ESR). A GST C-terminal domain is found at 86 to 207 (DPQKRAVVNQ…AGIEEFKKYF (122 aa)).

Belongs to the GST superfamily. Theta family. As to quaternary structure, homodimer.

It catalyses the reaction RX + glutathione = an S-substituted glutathione + a halide anion + H(+). It carries out the reaction 1,1,1-trichloro-2,2-bis(4-chlorophenyl)ethane = 1,1-dichloro-2,2-bis(4-chlorophenyl)ethylene + chloride + H(+). Functionally, conjugation of reduced glutathione to a wide number of exogenous and endogenous hydrophobic electrophiles. Has DDT dehydrochlorinase activity. This is Glutathione S-transferase 1, isoform C (GstD1) from Anopheles gambiae (African malaria mosquito).